The chain runs to 768 residues: uncharacterized protein (768 aa).

To E.coli YkiA.

This is an uncharacterized protein from Escherichia coli (strain K12).